The chain runs to 1187 residues: Trafficking protein particle complex II-specific subunit 120 homolog (1187 aa).

Positions 1037 to 1059 (GTTAKTDSSKEPGDGSSRSADES) are disordered.

Belongs to the TRS120 family. As to quaternary structure, part of the multisubunit TRAPP (transport protein particle) II complex composed of BET3, BET5, TRS20, TRS23, TRS31, TRS33, TRS65, TRS85, TRS120 and TRS130.

The protein localises to the golgi apparatus. It localises to the trans-Golgi network. The protein resides in the early endosome. Specific subunit of the TRAPP II complex, a highly conserved vesicle tethering complex that is required for the proper transport of proteins in post-Golgi trafficking pathways to the growing cell plate in mitotic active cells. The sequence is that of Trafficking protein particle complex II-specific subunit 120 homolog from Oryza sativa subsp. japonica (Rice).